The following is a 162-amino-acid chain: MSRLLVDDPCRAAWRLPIALRDISGVFAAMQCATGLEGFEVELTIADDALIAMINEEQLGCIGPTNILSFPAYGAPPDYPADGMECGTGQDAHTSLPLLGSLVLSVDTLRREAFLYGQPVQEHCLRLLAHGLGHIAGYDHGAEMEAFEEAAREAALATRTAR.

The Zn(2+) site is built by His130, His134, and His140.

This sequence belongs to the endoribonuclease YbeY family. Zn(2+) is required as a cofactor.

The protein resides in the cytoplasm. Functionally, single strand-specific metallo-endoribonuclease involved in late-stage 70S ribosome quality control and in maturation of the 3' terminus of the 16S rRNA. This Nitratidesulfovibrio vulgaris (strain ATCC 29579 / DSM 644 / CCUG 34227 / NCIMB 8303 / VKM B-1760 / Hildenborough) (Desulfovibrio vulgaris) protein is Endoribonuclease YbeY.